The following is a 201-amino-acid chain: IMP cyclohydrolase (201 aa).

It belongs to the archaeal IMP cyclohydrolase family.

It carries out the reaction IMP + H2O = 5-formamido-1-(5-phospho-D-ribosyl)imidazole-4-carboxamide. It participates in purine metabolism; IMP biosynthesis via de novo pathway; IMP from 5-formamido-1-(5-phospho-D-ribosyl)imidazole-4-carboxamide: step 1/1. Its function is as follows. Catalyzes the cyclization of 5-formylamidoimidazole-4-carboxamide ribonucleotide to IMP. The sequence is that of IMP cyclohydrolase from Methanococcus maripaludis (strain C5 / ATCC BAA-1333).